The sequence spans 290 residues: HTH-type transcriptional activator RhaR (290 aa).

The HTH araC/xylS-type domain occupies 179-277 (DLIMSALQQS…GMTPRDYRQR (99 aa)). 2 DNA-binding regions (H-T-H motif) span residues 196–217 (ANFCHKNQLVERSLKQLFRQQT) and 244–267 (ISDIAARCGFEDSNYFSAVFTREA).

As to quaternary structure, binds DNA as a dimer.

The protein resides in the cytoplasm. Functionally, activates expression of the rhaSR operon in response to L-rhamnose. The protein is HTH-type transcriptional activator RhaR of Yersinia pseudotuberculosis serotype O:3 (strain YPIII).